The sequence spans 212 residues: Large ribosomal subunit protein uL3 (212 aa).

Residues 119–146 form a disordered region; the sequence is YQGNIKRWGQSRGPETHGSRYHRIPGSM.

This sequence belongs to the universal ribosomal protein uL3 family. As to quaternary structure, part of the 50S ribosomal subunit. Forms a cluster with proteins L14 and L19.

In terms of biological role, one of the primary rRNA binding proteins, it binds directly near the 3'-end of the 23S rRNA, where it nucleates assembly of the 50S subunit. This is Large ribosomal subunit protein uL3 from Lactobacillus helveticus (strain DPC 4571).